The following is a 248-amino-acid chain: Proteasome subunit alpha type-7 (248 aa).

The O-linked (GlcNAc) serine glycan is linked to serine 130. Tyrosine 153 bears the Phosphotyrosine mark. An N6-acetyllysine modification is found at lysine 227.

This sequence belongs to the peptidase T1A family. The 26S proteasome consists of a 20S proteasome core and two 19S regulatory subunits. The 20S proteasome core is a barrel-shaped complex made of 28 subunits that are arranged in four stacked rings. The two outer rings are each formed by seven alpha subunits, and the two inner rings are formed by seven beta subunits. The proteolytic activity is exerted by three beta-subunits PSMB5, PSMB6 and PSMB7. PSMA7 interacts directly with the PSMG1-PSMG2 heterodimer which promotes 20S proteasome assembly. Interacts with HIF1A. Interacts with RAB7A. Interacts with PRKN. Interacts with ABL1 and ABL2. Interacts with EMAP2. Interacts with MAVS.

It is found in the cytoplasm. The protein resides in the nucleus. Its function is as follows. Component of the 20S core proteasome complex involved in the proteolytic degradation of most intracellular proteins. This complex plays numerous essential roles within the cell by associating with different regulatory particles. Associated with two 19S regulatory particles, forms the 26S proteasome and thus participates in the ATP-dependent degradation of ubiquitinated proteins. The 26S proteasome plays a key role in the maintenance of protein homeostasis by removing misfolded or damaged proteins that could impair cellular functions, and by removing proteins whose functions are no longer required. Associated with the PA200 or PA28, the 20S proteasome mediates ubiquitin-independent protein degradation. This type of proteolysis is required in several pathways including spermatogenesis (20S-PA200 complex) or generation of a subset of MHC class I-presented antigenic peptides (20S-PA28 complex). Inhibits the transactivation function of HIF-1A under both normoxic and hypoxia-mimicking conditions. The interaction with EMAP2 increases the proteasome-mediated HIF-1A degradation under the hypoxic conditions. Plays a role in hepatitis C virus internal ribosome entry site-mediated translation. Mediates nuclear translocation of the androgen receptor (AR) and thereby enhances androgen-mediated transactivation. Promotes MAVS degradation and thereby negatively regulates MAVS-mediated innate immune response. The protein is Proteasome subunit alpha type-7 (PSMA7) of Bos taurus (Bovine).